Consider the following 424-residue polypeptide: UDP-N-acetylglucosamine 1-carboxyvinyltransferase (424 aa).

Residue 22-23 (KN) coordinates phosphoenolpyruvate. UDP-N-acetyl-alpha-D-glucosamine is bound at residue R93. C117 functions as the Proton donor in the catalytic mechanism. C117 bears the 2-(S-cysteinyl)pyruvic acid O-phosphothioketal mark. UDP-N-acetyl-alpha-D-glucosamine-binding positions include 162 to 165 (KVSV), D307, and I329.

It belongs to the EPSP synthase family. MurA subfamily.

It localises to the cytoplasm. It carries out the reaction phosphoenolpyruvate + UDP-N-acetyl-alpha-D-glucosamine = UDP-N-acetyl-3-O-(1-carboxyvinyl)-alpha-D-glucosamine + phosphate. The protein operates within cell wall biogenesis; peptidoglycan biosynthesis. Functionally, cell wall formation. Adds enolpyruvyl to UDP-N-acetylglucosamine. This chain is UDP-N-acetylglucosamine 1-carboxyvinyltransferase, found in Actinobacillus pleuropneumoniae serotype 5b (strain L20).